The chain runs to 404 residues: Probable oxalate decarboxylase ARB_04859 (404 aa).

An N-terminal signal peptide occupies residues 1–17 (MKYSAVLVAALAAIADA). A Cupin type-1 1 domain is found at 74-215 (FSLSKTRMLY…NFGVPPSTFD (142 aa)). 4 residues coordinate Mn(2+): histidine 117, histidine 119, glutamate 123, and histidine 162. N-linked (GlcNAc...) asparagine glycosylation is found at asparagine 226 and asparagine 244. One can recognise a Cupin type-1 2 domain in the interval 249-393 (FHISNAPEIQ…AINVPIEVIE (145 aa)). Mn(2+) is bound by residues histidine 296, histidine 298, glutamate 303, and histidine 342. The N-linked (GlcNAc...) asparagine glycan is linked to asparagine 346. Glutamate 357 acts as the Proton donor in catalysis.

It depends on Mn(2+) as a cofactor.

It localises to the secreted. It catalyses the reaction oxalate + H(+) = formate + CO2. Its function is as follows. Converts oxalate to formate and CO(2) in an O(2)-dependent reaction. Can also catalyze minor side reactions: oxalate oxidation to produce H(2)O(2), and oxalate-dependent, H(2)O(2)-independent dye oxidations. In Arthroderma benhamiae (strain ATCC MYA-4681 / CBS 112371) (Trichophyton mentagrophytes), this protein is Probable oxalate decarboxylase ARB_04859.